The chain runs to 129 residues: Trefoil factor 2 (129 aa).

Residues 1-23 (MGRRDAQLLAALLVLGLCALAGS) form the signal peptide. P-type domains lie at 29 to 73 (CQCS…FHPL) and 79 to 122 (DQCV…FFPK). 7 disulfides stabilise this stretch: Cys-29–Cys-127, Cys-31–Cys-58, Cys-42–Cys-57, Cys-52–Cys-69, Cys-81–Cys-107, Cys-91–Cys-106, and Cys-101–Cys-118.

In terms of tissue distribution, stomach.

It is found in the secreted. In terms of biological role, inhibits gastrointestinal motility and gastric acid secretion. Could function as a structural component of gastric mucus, possibly by stabilizing glycoproteins in the mucus gel through interactions with carbohydrate side chains. This Homo sapiens (Human) protein is Trefoil factor 2 (TFF2).